Here is a 735-residue protein sequence, read N- to C-terminus: NAD(P)H-quinone oxidoreductase subunit 5, chloroplastic (735 aa).

16 consecutive transmembrane segments (helical) span residues Trp-9 to Phe-29, Trp-40 to Ile-60, Ile-89 to Ile-109, Phe-125 to Ile-145, Ile-147 to Thr-167, Ile-184 to Glu-204, Asn-219 to Ala-239, Thr-258 to Ala-278, Leu-280 to Ile-300, Leu-327 to Ile-347, Ala-354 to Ser-374, Ile-396 to Ser-416, Trp-425 to Tyr-445, Leu-540 to Phe-560, Phe-600 to Tyr-620, and Phe-714 to Leu-734.

This sequence belongs to the complex I subunit 5 family. As to quaternary structure, NDH is composed of at least 16 different subunits, 5 of which are encoded in the nucleus.

Its subcellular location is the plastid. The protein resides in the chloroplast thylakoid membrane. It catalyses the reaction a plastoquinone + NADH + (n+1) H(+)(in) = a plastoquinol + NAD(+) + n H(+)(out). The enzyme catalyses a plastoquinone + NADPH + (n+1) H(+)(in) = a plastoquinol + NADP(+) + n H(+)(out). Functionally, NDH shuttles electrons from NAD(P)H:plastoquinone, via FMN and iron-sulfur (Fe-S) centers, to quinones in the photosynthetic chain and possibly in a chloroplast respiratory chain. The immediate electron acceptor for the enzyme in this species is believed to be plastoquinone. Couples the redox reaction to proton translocation, and thus conserves the redox energy in a proton gradient. The sequence is that of NAD(P)H-quinone oxidoreductase subunit 5, chloroplastic (ndhF) from Gossypium hirsutum (Upland cotton).